The primary structure comprises 164 residues: UPF0201 protein MA_4659 (164 aa).

Belongs to the UPF0201 family.

The chain is UPF0201 protein MA_4659 from Methanosarcina acetivorans (strain ATCC 35395 / DSM 2834 / JCM 12185 / C2A).